A 358-amino-acid chain; its full sequence is Fructose-bisphosphate aldolase 2, cytoplasmic (358 aa).

R39 is a substrate binding site. The active-site Proton acceptor is E183. The active-site Schiff-base intermediate with dihydroxyacetone-P is the K225. Substrate is bound by residues 266–268 (SGG) and R298.

This sequence belongs to the class I fructose-bisphosphate aldolase family. As to quaternary structure, homotetramer.

It localises to the cytoplasm. The protein resides in the cytosol. It carries out the reaction beta-D-fructose 1,6-bisphosphate = D-glyceraldehyde 3-phosphate + dihydroxyacetone phosphate. The protein operates within carbohydrate degradation; glycolysis; D-glyceraldehyde 3-phosphate and glycerone phosphate from D-glucose: step 4/4. Its function is as follows. Fructose-bisphosphate aldolase that plays a key role in glycolysis and gluconeogenesis. The polypeptide is Fructose-bisphosphate aldolase 2, cytoplasmic (Oryza sativa subsp. japonica (Rice)).